The following is a 588-amino-acid chain: Aspartate--tRNA ligase (588 aa).

E174 contributes to the L-aspartate binding site. Residues 198 to 201 (QLFK) are aspartate. R220 contributes to the L-aspartate binding site. ATP contacts are provided by residues 220 to 222 (RDE) and Q229. An L-aspartate-binding site is contributed by H448. E482 contributes to the ATP binding site. Position 489 (R489) interacts with L-aspartate. An ATP-binding site is contributed by 534 to 537 (GIDR).

This sequence belongs to the class-II aminoacyl-tRNA synthetase family. Type 1 subfamily. In terms of assembly, homodimer.

It localises to the cytoplasm. It catalyses the reaction tRNA(Asp) + L-aspartate + ATP = L-aspartyl-tRNA(Asp) + AMP + diphosphate. Functionally, catalyzes the attachment of L-aspartate to tRNA(Asp) in a two-step reaction: L-aspartate is first activated by ATP to form Asp-AMP and then transferred to the acceptor end of tRNA(Asp). The polypeptide is Aspartate--tRNA ligase (Xanthomonas campestris pv. campestris (strain 8004)).